A 347-amino-acid polypeptide reads, in one-letter code: Phenylalanine--tRNA ligase alpha subunit (347 aa).

E261 contributes to the Mg(2+) binding site.

This sequence belongs to the class-II aminoacyl-tRNA synthetase family. Phe-tRNA synthetase alpha subunit type 1 subfamily. Tetramer of two alpha and two beta subunits. Mg(2+) is required as a cofactor.

The protein resides in the cytoplasm. It catalyses the reaction tRNA(Phe) + L-phenylalanine + ATP = L-phenylalanyl-tRNA(Phe) + AMP + diphosphate + H(+). This is Phenylalanine--tRNA ligase alpha subunit from Streptococcus mutans serotype c (strain ATCC 700610 / UA159).